We begin with the raw amino-acid sequence, 150 residues long: Large ribosomal subunit protein bL9 (150 aa).

This sequence belongs to the bacterial ribosomal protein bL9 family.

In terms of biological role, binds to the 23S rRNA. The polypeptide is Large ribosomal subunit protein bL9 (Albidiferax ferrireducens (strain ATCC BAA-621 / DSM 15236 / T118) (Rhodoferax ferrireducens)).